A 427-amino-acid polypeptide reads, in one-letter code: Inward rectifier potassium channel 2 (427 aa).

The Cytoplasmic portion of the chain corresponds to 1-81 (MGSVRTNRYS…IFTTCVDIRW (81 aa)). Cys-76 carries the post-translational modification S-nitrosocysteine. Residues 82–106 (RWMLVIFCLAFVLSWLFFGCVFWLI) traverse the membrane as a helical segment. Topologically, residues 107–128 (ALLHGDLDASKESKACVSEVNS) are extracellular. An intramembrane region (helical; Pore-forming) is located at residues 129-140 (FTAAFLFSIETQ). Positions 141–147 (TTIGYGF) form an intramembrane region, pore-forming. The Selectivity filter signature appears at 142–147 (TIGYGF). The Extracellular portion of the chain corresponds to 148–156 (RCVTDECPI). Residues 157-178 (AVFMVVFQSIVGCIIDAFIIGA) form a helical membrane-spanning segment. At 179–427 (VMAKMAKPKK…PRPLRRESEI (249 aa)) the chain is on the cytoplasmic side. A polyphosphoinositide (PIP2)-binding region spans residues 181-208 (AKMAKPKKRNETLVFSHNAVIAMRDGKL). The disordered stretch occupies residues 383–427 (TSKEEEDSENGVPESTSTDSPPGIDLHNQASVPLEPRPLRRESEI). A PDZ-binding motif is present at residues 425–427 (SEI).

The protein belongs to the inward rectifier-type potassium channel (TC 1.A.2.1) family. KCNJ2 subfamily. In terms of assembly, homotetramer. Homomultimeric and heteromultimeric association with KCNJ4/Kir2.3. Can form heteromeric channels with Kir2.6/KCNJ18. Associates, via its PDZ-recognition domain, with a complex containing LIN7A, LIN7B, LIN7C, DLG1, CASK and APBA1. S-nitrosylation increases the open probability and inward rectifying currents. In terms of tissue distribution, prominently expressed in the central nervous system. Also found in other excitable tissues such as heart and skeletal muscle.

The protein localises to the cell membrane. It localises to the sarcolemma. Its subcellular location is the T-tubule. It catalyses the reaction K(+)(in) = K(+)(out). With respect to regulation, activated by phosphatidylinositol 4,5 biphosphate (PtdIns(4,5)P2). Inward rectifier potassium channels are characterized by a greater tendency to allow potassium to flow into the cell rather than out of it. Their voltage dependence is regulated by the concentration of extracellular potassium; as external potassium is raised, the voltage range of the channel opening shifts to more positive voltages. The inward rectification is mainly due to the blockage of outward current by internal magnesium. Can be blocked by extracellular barium and cesium. Probably participates in establishing action potential waveform and excitability of neuronal and muscle tissues. The protein is Inward rectifier potassium channel 2 (Kcnj2) of Rattus norvegicus (Rat).